The chain runs to 160 residues: MPSMDIVSETDLEEVRNAVDNANREITTRFDFRGVEASFEWKKPNIILKAEGDFQLKQMCDLLRSQLAKRNVDAKAMAVGDASASGRNWSQQVTFKEGIEQDMAKQLVKLIKGEKLKVQAAIQGEQVRVTGKKRDELQAVMQLVRTAELEQSFQFTNFKD.

This sequence belongs to the YajQ family.

Functionally, nucleotide-binding protein. The protein is Nucleotide-binding protein CPS_1098 of Colwellia psychrerythraea (strain 34H / ATCC BAA-681) (Vibrio psychroerythus).